We begin with the raw amino-acid sequence, 259 residues long: MPATTGPQDVSGRAGGPASTERLHVAIIMDGNGRWAKQRGMPRVLGHRAGVNALKRTVEGAQSQNVGVLTVFGFSTENWSRPPQEVSELMGLLKAYVESDLERLAKAGVRVRIIGRRTGLSPDIAEVIERAERRTAQNSEFVLQVAFNYGGQADITDAARAFAERVERGEAKASDLNEKTFEQFLSTASAPPPDLIVRTSGERRISNFLLWDCAYAELVFQDVLWPDYGPEALAAAIAEYRGRDRRYGGVAADDVAVAG.

Asp30 is a catalytic residue. Position 30 (Asp30) interacts with Mg(2+). Substrate contacts are provided by residues Gly31 to Arg34, Trp35, Arg43, His47, and Ser75 to Glu77. Asn78 (proton acceptor) is an active-site residue. Substrate-binding positions include Trp79, Arg81, Arg198, and Arg204–Ser206. Position 217 (Glu217) interacts with Mg(2+).

Belongs to the UPP synthase family. In terms of assembly, homodimer. It depends on Mg(2+) as a cofactor.

In terms of biological role, catalyzes the condensation of isopentenyl diphosphate (IPP) with allylic pyrophosphates generating different type of terpenoids. The protein is Isoprenyl transferase of Caulobacter vibrioides (strain ATCC 19089 / CIP 103742 / CB 15) (Caulobacter crescentus).